A 146-amino-acid chain; its full sequence is 3-dehydroquinate dehydratase (146 aa).

Tyr-24 serves as the catalytic Proton acceptor. Residues Asn-73, His-79, and Asp-86 each contribute to the substrate site. His-99 functions as the Proton donor in the catalytic mechanism. Substrate is bound by residues 100 to 101 (LS) and Arg-110.

Belongs to the type-II 3-dehydroquinase family. In terms of assembly, homododecamer.

It catalyses the reaction 3-dehydroquinate = 3-dehydroshikimate + H2O. The protein operates within metabolic intermediate biosynthesis; chorismate biosynthesis; chorismate from D-erythrose 4-phosphate and phosphoenolpyruvate: step 3/7. Its function is as follows. Catalyzes a trans-dehydration via an enolate intermediate. The sequence is that of 3-dehydroquinate dehydratase from Shewanella baltica (strain OS195).